Here is a 194-residue protein sequence, read N- to C-terminus: ATP-dependent Clp protease proteolytic subunit (194 aa).

Serine 98 functions as the Nucleophile in the catalytic mechanism. Residue histidine 123 is part of the active site.

It belongs to the peptidase S14 family. In terms of assembly, fourteen ClpP subunits assemble into 2 heptameric rings which stack back to back to give a disk-like structure with a central cavity, resembling the structure of eukaryotic proteasomes.

Its subcellular location is the cytoplasm. It carries out the reaction Hydrolysis of proteins to small peptides in the presence of ATP and magnesium. alpha-casein is the usual test substrate. In the absence of ATP, only oligopeptides shorter than five residues are hydrolyzed (such as succinyl-Leu-Tyr-|-NHMec, and Leu-Tyr-Leu-|-Tyr-Trp, in which cleavage of the -Tyr-|-Leu- and -Tyr-|-Trp bonds also occurs).. In terms of biological role, cleaves peptides in various proteins in a process that requires ATP hydrolysis. Has a chymotrypsin-like activity. Plays a major role in the degradation of misfolded proteins. This is ATP-dependent Clp protease proteolytic subunit from Staphylococcus epidermidis (strain ATCC 35984 / DSM 28319 / BCRC 17069 / CCUG 31568 / BM 3577 / RP62A).